Consider the following 442-residue polypeptide: Casein kinase 1-like protein 10 (442 aa).

The Protein kinase domain maps to 9–278 (FKLGRKIGSG…LKRLFRDLFI (270 aa)). ATP contacts are provided by residues 15-23 (IGSGSFGEL) and Lys-38. The Proton acceptor role is filled by Asp-128. 2 disordered regions span residues 299–323 (GSIS…ERNE) and 381–421 (AVMS…LSAR). A compositionally biased stretch (pro residues) spans 305–317 (RPNPKPALDPPGP). The segment covering 384–394 (SSSQPGSSGEL) has biased composition (low complexity). Positions 400 to 417 (SKLFSSSAQKIQPVQETK) are enriched in polar residues.

It belongs to the protein kinase superfamily. CK1 Ser/Thr protein kinase family. Casein kinase I subfamily. Monomer. Autophosphorylated.

The protein resides in the cytoplasm. It is found in the cell junction. The protein localises to the plasmodesma. It carries out the reaction L-seryl-[protein] + ATP = O-phospho-L-seryl-[protein] + ADP + H(+). The catalysed reaction is L-threonyl-[protein] + ATP = O-phospho-L-threonyl-[protein] + ADP + H(+). Functionally, casein kinases are operationally defined by their preferential utilization of acidic proteins such as caseins as substrates. It can phosphorylate a large number of proteins. The chain is Casein kinase 1-like protein 10 from Arabidopsis thaliana (Mouse-ear cress).